Here is a 460-residue protein sequence, read N- to C-terminus: Bifunctional protein GlmU (460 aa).

A pyrophosphorylase region spans residues 1–229; that stretch reads MTNYAIILAA…FNESLGVNDR (229 aa). UDP-N-acetyl-alpha-D-glucosamine-binding positions include 8–11, Lys22, Gln72, and 77–78; these read LAAG and GT. A Mg(2+)-binding site is contributed by Asp102. Gly139, Glu154, Asn169, and Asn227 together coordinate UDP-N-acetyl-alpha-D-glucosamine. Asn227 serves as a coordination point for Mg(2+). The segment at 230 to 250 is linker; the sequence is VALATAETVMRQRITQKHMVN. An N-acetyltransferase region spans residues 251–460; it reads GVTFQNPETV…RLAHHPSRSK (210 aa). UDP-N-acetyl-alpha-D-glucosamine-binding residues include Arg332 and Lys350. The Proton acceptor role is filled by His362. Tyr365 and Asn376 together coordinate UDP-N-acetyl-alpha-D-glucosamine. Acetyl-CoA-binding positions include Ala379, 385–386, Ser404, Ala422, and Arg439; that span reads NY.

It in the N-terminal section; belongs to the N-acetylglucosamine-1-phosphate uridyltransferase family. This sequence in the C-terminal section; belongs to the transferase hexapeptide repeat family. In terms of assembly, homotrimer. The cofactor is Mg(2+).

Its subcellular location is the cytoplasm. The catalysed reaction is alpha-D-glucosamine 1-phosphate + acetyl-CoA = N-acetyl-alpha-D-glucosamine 1-phosphate + CoA + H(+). The enzyme catalyses N-acetyl-alpha-D-glucosamine 1-phosphate + UTP + H(+) = UDP-N-acetyl-alpha-D-glucosamine + diphosphate. The protein operates within nucleotide-sugar biosynthesis; UDP-N-acetyl-alpha-D-glucosamine biosynthesis; N-acetyl-alpha-D-glucosamine 1-phosphate from alpha-D-glucosamine 6-phosphate (route II): step 2/2. It participates in nucleotide-sugar biosynthesis; UDP-N-acetyl-alpha-D-glucosamine biosynthesis; UDP-N-acetyl-alpha-D-glucosamine from N-acetyl-alpha-D-glucosamine 1-phosphate: step 1/1. It functions in the pathway bacterial outer membrane biogenesis; LPS lipid A biosynthesis. Functionally, catalyzes the last two sequential reactions in the de novo biosynthetic pathway for UDP-N-acetylglucosamine (UDP-GlcNAc). The C-terminal domain catalyzes the transfer of acetyl group from acetyl coenzyme A to glucosamine-1-phosphate (GlcN-1-P) to produce N-acetylglucosamine-1-phosphate (GlcNAc-1-P), which is converted into UDP-GlcNAc by the transfer of uridine 5-monophosphate (from uridine 5-triphosphate), a reaction catalyzed by the N-terminal domain. The protein is Bifunctional protein GlmU of Streptococcus pyogenes serotype M5 (strain Manfredo).